The chain runs to 449 residues: Trigger factor (449 aa).

Residues 172–257 (GDEVRFDFKG…IKEITNVKPQ (86 aa)) form the PPIase FKBP-type domain.

This sequence belongs to the FKBP-type PPIase family. Tig subfamily.

The protein resides in the cytoplasm. It carries out the reaction [protein]-peptidylproline (omega=180) = [protein]-peptidylproline (omega=0). Functionally, involved in protein export. Acts as a chaperone by maintaining the newly synthesized protein in an open conformation. Functions as a peptidyl-prolyl cis-trans isomerase. The protein is Trigger factor of Ureaplasma parvum serovar 3 (strain ATCC 27815 / 27 / NCTC 11736).